The following is a 192-amino-acid chain: Xanthine phosphoribosyltransferase (192 aa).

Positions 20 and 27 each coordinate xanthine. Residue 128-132 coordinates 5-phospho-alpha-D-ribose 1-diphosphate; the sequence is ANGDA. Lys-156 lines the xanthine pocket.

This sequence belongs to the purine/pyrimidine phosphoribosyltransferase family. Xpt subfamily. Homodimer.

Its subcellular location is the cytoplasm. It carries out the reaction XMP + diphosphate = xanthine + 5-phospho-alpha-D-ribose 1-diphosphate. It participates in purine metabolism; XMP biosynthesis via salvage pathway; XMP from xanthine: step 1/1. Converts the preformed base xanthine, a product of nucleic acid breakdown, to xanthosine 5'-monophosphate (XMP), so it can be reused for RNA or DNA synthesis. This Staphylococcus aureus (strain Mu3 / ATCC 700698) protein is Xanthine phosphoribosyltransferase.